The primary structure comprises 230 residues: Ephrin-A3 (230 aa).

Positions 1 to 22 (MAAAPLLLLLLLVPVPLLPLLA) are cleaved as a signal peptide. An Ephrin RBD domain is found at 30-161 (GNRHAVYWNS…RMKVFVCCAS (132 aa)). N-linked (GlcNAc...) asparagine glycans are attached at residues Asn-38, Asn-67, Asn-84, and Asn-92. 2 disulfides stabilise this stretch: Cys-63-Cys-102 and Cys-91-Cys-150. Gly-206 carries the GPI-anchor amidated glycine lipid modification. Positions 207–230 (TSPKREHLPLAVGIAFFLMTLLAS) are cleaved as a propeptide — removed in mature form.

This sequence belongs to the ephrin family. In terms of assembly, interacts with EPHA8; activates EPHA8. As to expression, expressed in myogenic progenitor cells.

It is found in the cell membrane. In terms of biological role, cell surface GPI-bound ligand for Eph receptors, a family of receptor tyrosine kinases which are crucial for migration, repulsion and adhesion during neuronal, vascular and epithelial development. Binds promiscuously Eph receptors residing on adjacent cells, leading to contact-dependent bidirectional signaling into neighboring cells. The signaling pathway downstream of the receptor is referred to as forward signaling while the signaling pathway downstream of the ephrin ligand is referred to as reverse signaling. In Mus musculus (Mouse), this protein is Ephrin-A3 (Efna3).